Consider the following 51-residue polypeptide: uncharacterized protein (51 aa).

Residues 1 to 28 are disordered; it reads MQQPQNITTSSISNNNNNNTSLTLQQQQ. Residues 13–47 adopt a coiled-coil conformation; the sequence is SNNNNNNTSLTLQQQQEQLQQLQIKRKRNLMKQLQ.

This is an uncharacterized protein from Dictyostelium discoideum (Social amoeba).